The following is a 382-amino-acid chain: cAMP-dependent protein kinase type I-alpha regulatory subunit (382 aa).

N-acetylalanine is present on Ala2. Positions 2 to 136 (ATSSSSSSEE…AALAKAIEKN (135 aa)) are dimerization and phosphorylation. Residues 62–96 (TKQLLNQQKSGSRSDSREDEISPPPPMNPVVKGRR) form a disordered region. The Pseudophosphorylation motif signature appears at 97 to 101 (RRGAI). Residues 138–255 (LFAH…SKVS), Glu203, Arg212, 256–382 (ILES…SLSV), Glu327, and Arg336 contribute to the 3',5'-cyclic AMP site.

The protein belongs to the cAMP-dependent kinase regulatory chain family. The inactive form of the enzyme is composed of two regulatory chains and two catalytic chains. Activation by cAMP produces two active catalytic monomers and a regulatory dimer that binds four cAMP molecules. In terms of processing, the pseudophosphorylation site binds to the substrate-binding region of the catalytic chain but is not phosphorylated. The physiological significance of phosphorylations by other kinases is unclear.

Its subcellular location is the cell membrane. This is cAMP-dependent protein kinase type I-alpha regulatory subunit (PRKAR1A) from Gallus gallus (Chicken).